A 385-amino-acid chain; its full sequence is F-box only protein 4 (385 aa).

S11 and S46 each carry phosphoserine. The 47-residue stretch at 54–100 folds into the F-box domain; sequence TSALTRLPVDVQLYILSFLSPHDLCQLGSTDHYWNKTIRDPILWRYF.

In terms of assembly, homodimer. Part of the SCF (SKP1-CUL1-F-box) E3 ubiquitin-protein ligase complex SCF(FBXO4) formed of CUL1, SKP1, RBX1 and FBXO4. Interacts with TERF1; this interaction is prevented in the presence of GNL3L. Identified in a complex with CRYAB and CCND1. Phosphorylation at Ser-11 varies during the cell cycle. It is low in resting cells and high in the S phase and the G2/M phase of the cell cycle. Phosphorylation is decreased during late G1 phase. Phosphorylation at Ser-11 is important for homodimerization and for optimal ubiquitin ligase activity towards CCND1.

Its subcellular location is the cytoplasm. The protein operates within protein modification; protein ubiquitination. Substrate recognition component of a SCF (SKP1-CUL1-F-box protein) E3 ubiquitin-protein ligase complex that mediates the ubiquitination and subsequent proteasomal degradation of target proteins. Promotes ubiquitination of cyclin-D1 (CCND1) and its subsequent proteasomal degradation. However, it does not act as a major regulator of CCND1 stability during the G1/S transition. Recognizes TERF1 and promotes its ubiquitination together with UBE2D1. Promotes ubiquitination of FXR1 following phosphorylation of FXR1 by GSK3B, leading to FXR1 degradation by the proteasome. The polypeptide is F-box only protein 4 (Mus musculus (Mouse)).